A 536-amino-acid chain; its full sequence is uncharacterized protein (536 aa).

An SWIM-type zinc finger spans residues 71–98; it reads LFVIVKSGCSCPSGRICRHMLAVFLYVY. Positions 482-528 form a coiled coil; sequence YKEAARYLKKLRTLYKKAKKQKVWERYIQLLSSHYKRLRALQEELQK.

This is an uncharacterized protein from Bacillus subtilis (strain 168).